We begin with the raw amino-acid sequence, 510 residues long: Inositol-3-phosphate synthase (510 aa).

NAD(+) is bound by residues Gly70, Gly71, Asn72, Asn73, Asp143, Ile180, Gln190, Arg193, Thr230, Ala231, Asn232, Thr233, Gly281, Ser282, Asp306, Ser309, Asn340, Asn341, Asp342, Lys355, Gly393, Asp394, Asp422, and Ser423.

Belongs to the myo-inositol 1-phosphate synthase family. NAD(+) is required as a cofactor.

The protein resides in the cytoplasm. Its subcellular location is the cytosol. It is found in the nucleus. It catalyses the reaction D-glucose 6-phosphate = 1D-myo-inositol 3-phosphate. It functions in the pathway polyol metabolism; myo-inositol biosynthesis; myo-inositol from D-glucose 6-phosphate: step 1/2. Key enzyme in myo-inositol biosynthesis pathway that catalyzes the conversion of glucose 6-phosphate to 1-myo-inositol 1-phosphate in a NAD-dependent manner. The sequence is that of Inositol-3-phosphate synthase from Hordeum vulgare (Barley).